Reading from the N-terminus, the 438-residue chain is Coenzyme A disulfide reductase (438 aa).

FAD is bound at residue 8–33 (GAVAGGATCASQIRRLDKESEIIVFE). Residues Thr15, Gln19, Arg22, Ser39, and Asn42 each contribute to the substrate site. Catalysis depends on Cys43, which acts as the Nucleophile. The active-site Redox-active is Cys43. Residue Lys71 participates in substrate binding. Residue 151 to 166 (ALVVGAGYISLEVLEN) coordinates NADP(+). 267–277 (TNIPNIYALGD) is an FAD binding site. Position 299 (His299) interacts with substrate. Tyr419 contributes to the FAD binding site. A substrate-binding site is contributed by Lys427.

It belongs to the class-III pyridine nucleotide-disulfide oxidoreductase family. Homodimer. FAD serves as cofactor.

The catalysed reaction is NADP(+) + 2 CoA = CoA-disulfide + NADPH + H(+). Its function is as follows. Catalyzes specifically the NADPH-dependent reduction of coenzyme A disulfide. The sequence is that of Coenzyme A disulfide reductase from Staphylococcus epidermidis (strain ATCC 35984 / DSM 28319 / BCRC 17069 / CCUG 31568 / BM 3577 / RP62A).